The primary structure comprises 240 residues: Chromatin structure-remodeling complex protein BSH (240 aa).

This sequence belongs to the SNF5 family. Interacts with SWI3A and SWI3B, but not with BRM. As to expression, expressed in roots, stems, leaves, flowers and siliques.

It localises to the nucleus. Functionally, component of a multiprotein complex equivalent of the yeast SWI/SNF complex, an ATP-dependent chromatin-remodeling complex, which is required for the positive and negative regulation of gene expression of a large number of genes. It changes chromatin structure by altering DNA-histone contacts within a nucleosome, leading eventually to a change in nucleosome position, thus facilitating or repressing binding of gene-specific transcription factors. This is Chromatin structure-remodeling complex protein BSH (BSH) from Arabidopsis thaliana (Mouse-ear cress).